A 248-amino-acid chain; its full sequence is Methyl-coenzyme M reductase subunit gamma (248 aa).

Arginine 121 is a binding site for coenzyme M.

It belongs to the methyl-coenzyme M reductase gamma subunit family. As to quaternary structure, MCR is a hexamer of two alpha, two beta, and two gamma chains, forming a dimer of heterotrimers. The cofactor is coenzyme F430.

It is found in the cytoplasm. The catalysed reaction is coenzyme B + methyl-coenzyme M = methane + coenzyme M-coenzyme B heterodisulfide. It participates in one-carbon metabolism; methyl-coenzyme M reduction; methane from methyl-coenzyme M: step 1/1. Component of the methyl-coenzyme M reductase (MCR) I that catalyzes the reductive cleavage of methyl-coenzyme M (CoM-S-CH3 or 2-(methylthio)ethanesulfonate) using coenzyme B (CoB or 7-mercaptoheptanoylthreonine phosphate) as reductant which results in the production of methane and the mixed heterodisulfide of CoB and CoM (CoM-S-S-CoB). This is the final step in methanogenesis. The sequence is that of Methyl-coenzyme M reductase subunit gamma (mcrG) from Methanosarcina barkeri (strain Fusaro / DSM 804).